Reading from the N-terminus, the 472-residue chain is UDP-N-acetylmuramoyl-L-alanyl-D-glutamate--2,6-diaminopimelate ligase (472 aa).

Residue Ser21 coordinates UDP-N-acetyl-alpha-D-muramoyl-L-alanyl-D-glutamate. 99–105 (GTNGKTS) provides a ligand contact to ATP. Residues 143–144 (TT), Ser170, Gln176, and Arg178 each bind UDP-N-acetyl-alpha-D-muramoyl-L-alanyl-D-glutamate. An N6-carboxylysine modification is found at Lys210. Meso-2,6-diaminopimelate is bound by residues Arg367, 391 to 394 (DNPR), Gly440, and Glu444. The Meso-diaminopimelate recognition motif motif lies at 391–394 (DNPR).

The protein belongs to the MurCDEF family. MurE subfamily. Mg(2+) is required as a cofactor. Carboxylation is probably crucial for Mg(2+) binding and, consequently, for the gamma-phosphate positioning of ATP.

It localises to the cytoplasm. The enzyme catalyses UDP-N-acetyl-alpha-D-muramoyl-L-alanyl-D-glutamate + meso-2,6-diaminopimelate + ATP = UDP-N-acetyl-alpha-D-muramoyl-L-alanyl-gamma-D-glutamyl-meso-2,6-diaminopimelate + ADP + phosphate + H(+). It participates in cell wall biogenesis; peptidoglycan biosynthesis. In terms of biological role, catalyzes the addition of meso-diaminopimelic acid to the nucleotide precursor UDP-N-acetylmuramoyl-L-alanyl-D-glutamate (UMAG) in the biosynthesis of bacterial cell-wall peptidoglycan. The chain is UDP-N-acetylmuramoyl-L-alanyl-D-glutamate--2,6-diaminopimelate ligase from Anaplasma marginale (strain St. Maries).